Here is a 341-residue protein sequence, read N- to C-terminus: Anthranilate phosphoribosyltransferase (341 aa).

5-phospho-alpha-D-ribose 1-diphosphate-binding positions include Gly-84, Asn-94–Thr-97, Lys-112–Ser-120, and Ser-124. Gly-84 contributes to the anthranilate binding site. Ser-96 serves as a coordination point for Mg(2+). Arg-170 contacts anthranilate. Mg(2+) is bound by residues Asp-229 and Glu-230.

The protein belongs to the anthranilate phosphoribosyltransferase family. Homodimer. It depends on Mg(2+) as a cofactor.

The catalysed reaction is N-(5-phospho-beta-D-ribosyl)anthranilate + diphosphate = 5-phospho-alpha-D-ribose 1-diphosphate + anthranilate. The protein operates within amino-acid biosynthesis; L-tryptophan biosynthesis; L-tryptophan from chorismate: step 2/5. Catalyzes the transfer of the phosphoribosyl group of 5-phosphorylribose-1-pyrophosphate (PRPP) to anthranilate to yield N-(5'-phosphoribosyl)-anthranilate (PRA). This is Anthranilate phosphoribosyltransferase from Methylobacillus flagellatus (strain ATCC 51484 / DSM 6875 / VKM B-1610 / KT).